The chain runs to 760 residues: Xaa-Pro dipeptidyl-peptidase (760 aa).

Catalysis depends on charge relay system residues Ser349, Asp469, and His499.

The protein belongs to the peptidase S15 family. In terms of assembly, homodimer.

The protein resides in the cytoplasm. It catalyses the reaction Hydrolyzes Xaa-Pro-|- bonds to release unblocked, N-terminal dipeptides from substrates including Ala-Pro-|-p-nitroanilide and (sequentially) Tyr-Pro-|-Phe-Pro-|-Gly-Pro-|-Ile.. Removes N-terminal dipeptides sequentially from polypeptides having unsubstituted N-termini provided that the penultimate residue is proline. The polypeptide is Xaa-Pro dipeptidyl-peptidase (Streptococcus pyogenes serotype M4 (strain MGAS10750)).